The primary structure comprises 287 residues: Putative esterase/lipase HI_0193 (287 aa).

In terms of domain architecture, AB hydrolase-1 spans 47–273 (PVLIFIHGLF…SGHWVHAEKP (227 aa)). Residues Ser119 and His266 contribute to the active site.

The protein belongs to the DmpD/TodF/XylF esterase family.

The sequence is that of Putative esterase/lipase HI_0193 from Haemophilus influenzae (strain ATCC 51907 / DSM 11121 / KW20 / Rd).